A 460-amino-acid polypeptide reads, in one-letter code: Probable Xaa-Pro aminopeptidase PEPP (460 aa).

Positions 256, 267, 390, and 430 each coordinate Mn(2+).

Belongs to the peptidase M24B family. It depends on Mn(2+) as a cofactor.

It catalyses the reaction Release of any N-terminal amino acid, including proline, that is linked to proline, even from a dipeptide or tripeptide.. Functionally, catalyzes the removal of a penultimate prolyl residue from the N-termini of peptides. This is Probable Xaa-Pro aminopeptidase PEPP (PEPP) from Podospora anserina (strain S / ATCC MYA-4624 / DSM 980 / FGSC 10383) (Pleurage anserina).